The chain runs to 162 residues: Putative ankyrin repeat protein R664 (162 aa).

3 ANK repeats span residues 10-40, 47-78, and 82-111; these read KKLVEFLLYSNQDCSLIVIDALITIGANVNY, NDTPILSVITKTSESNPETVKLLLDKGADVNY, and YHETALMRTIKYGNFGIAKILLDYGANPYL.

In Acanthamoeba polyphaga mimivirus (APMV), this protein is Putative ankyrin repeat protein R664.